We begin with the raw amino-acid sequence, 437 residues long: Beta-1,3-galactosyl-O-glycosyl-glycoprotein beta-1,6-N-acetylglucosaminyltransferase 3 (437 aa).

The Cytoplasmic portion of the chain corresponds to 1 to 6 (MVSWRR). The chain crosses the membrane as a helical; Signal-anchor for type II membrane protein span at residues 7-27 (FCWHYHGWTLGCYMLLAIIAL). Over 28 to 437 (KLSLRLKCDF…RHKAIYGTEL (410 aa)) the chain is Lumenal. 4 disulfides stabilise this stretch: C70/C227, C161/C381, C182/C209, and C390/C422. N288 carries N-linked (GlcNAc...) asparagine glycosylation.

The protein belongs to the glycosyltransferase 14 family. In terms of processing, N-glycosylated.

The protein resides in the golgi apparatus membrane. It catalyses the reaction a 3-O-[beta-D-galactosyl-(1-&gt;3)-N-acetyl-alpha-D-galactosaminyl]-L-seryl-[protein] + UDP-N-acetyl-alpha-D-glucosamine = 3-O-{beta-D-galactosyl-(1-&gt;3)-[N-acetyl-beta-D-glucosaminyl-(1-&gt;6)]-N-acetyl-alpha-D-galactosaminyl}-L-seryl-[protein] + UDP + H(+). The enzyme catalyses a 3-O-[beta-D-galactosyl-(1-&gt;3)-N-acetyl-alpha-D-galactosaminyl]-L-threonyl-[protein] + UDP-N-acetyl-alpha-D-glucosamine = a 3-O-{beta-D-galactosyl-(1-&gt;3)-[N-acetyl-beta-D-glucosaminyl-(1-&gt;6)]-N-acetyl-alpha-D-galactosaminyl}-L-threonyl-[protein] + UDP + H(+). It carries out the reaction a beta-D-Gal-(1-&gt;4)-beta-D-GlcNAc-(1-&gt;3)-beta-D-Gal-(1-&gt;4)-beta-D-GlcNAc derivative + UDP-N-acetyl-alpha-D-glucosamine = a beta-D-Gal-(1-&gt;4)-beta-D-GlcNAc-(1-&gt;3)-[beta-D-GlcNAc-(1-&gt;6)]-beta-D-Gal-(1-&gt;4)-N-acetyl-beta-D-glucosaminyl derivative + UDP + H(+). The catalysed reaction is 3-O-[N-acetyl-beta-D-glucosaminyl-(1-&gt;3)-N-acetyl-alpha-D-galactosaminyl]-L-seryl-[protein] + UDP-N-acetyl-alpha-D-glucosamine = 3-O-[N-acetyl-beta-D-glucosaminyl-(1-&gt;3)-[N-acetyl-beta-D-glucosaminyl-(1-&gt;6)]-N-acetyl-alpha-D-galactosaminyl]-L-seryl-[protein] + UDP + H(+). It catalyses the reaction a 3-O-[N-acetyl-beta-D-glucosaminyl-(1-&gt;3)-N-acetyl-alpha-D-galactosaminyl]-L-threonyl-[protein] + UDP-N-acetyl-alpha-D-glucosamine = 3-O-[N-acetyl-beta-D-glucosaminyl-(1-&gt;3)-[N-acetyl-beta-D-glucosaminyl-(1-&gt;6)]-N-acetyl-alpha-D-galactosaminyl]-L-threonyl-[protein] + UDP + H(+). Its pathway is protein modification; protein glycosylation. Glycosyltransferase that can synthesize all known mucin beta 6 N-acetylglucosaminides. Mediates core 2 and core 4 O-glycan branching, 2 important steps in mucin-type biosynthesis. Also has I-branching enzyme activity by converting linear into branched poly-N-acetyllactosaminoglycans, leading to introduce the blood group I antigen during embryonic development. The polypeptide is Beta-1,3-galactosyl-O-glycosyl-glycoprotein beta-1,6-N-acetylglucosaminyltransferase 3 (Gcnt3) (Rattus norvegicus (Rat)).